A 779-amino-acid polypeptide reads, in one-letter code: LPS-assembly protein LptD (779 aa).

An N-terminal signal peptide occupies residues 1 to 23; that stretch reads MKIRYSVLSTFIISALYSQDTQA.

Belongs to the LptD family. Component of the lipopolysaccharide transport and assembly complex. Interacts with LptE and LptA.

The protein resides in the cell outer membrane. Functionally, together with LptE, is involved in the assembly of lipopolysaccharide (LPS) at the surface of the outer membrane. This Haemophilus ducreyi (strain 35000HP / ATCC 700724) protein is LPS-assembly protein LptD.